A 189-amino-acid polypeptide reads, in one-letter code: GTPase KRas (189 aa).

Met1 carries the post-translational modification N-acetylmethionine. N-acetylthreonine; in GTPase KRas, N-terminally processed is present on Thr2. GTP contacts are provided by residues 10–18, 29–35, and 59–60; these read GAGGVGKSA, VDEYDPT, and AG. An Effector region motif is present at residues 32–40; the sequence is YDPTIEDSY. Lys104 carries the post-translational modification N6-acetyllysine. 116 to 119 contributes to the GTP binding site; it reads NKCD. The segment at 166–185 is hypervariable region; sequence YRLKKISKEEKTPGCVKIKK. Lys170 participates in a covalent cross-link: Glycyl lysine isopeptide (Lys-Gly) (interchain with G-Cter in ubiquitin). Residue Cys180 is the site of S-palmitoyl cysteine attachment. 3 N6-palmitoyl lysine lipidation sites follow: Lys182, Lys184, and Lys185. Position 186 is a cysteine methyl ester (Cys186). Cys186 carries S-farnesyl cysteine lipidation. Positions 187-189 are cleaved as a propeptide — removed in mature form; that stretch reads VIM.

This sequence belongs to the small GTPase superfamily. Ras family. As to quaternary structure, interacts with PHLPP. Interacts (active GTP-bound form preferentially) with RGS14. Interacts (when farnesylated) with PDE6D; this promotes dissociation from the cell membrane. Interacts with SOS1. Interacts (when farnesylated) with GPR31. Interacts with RAP1GDS1. Interacts (active GTP-bound form) with both SHOC2 and PP1c (all isoforms) to form a tertiary complex; SHOC2 and PP1c preferably bind M-Ras/MRAS, but they also bind K-Ras/KRAS, N-Ras/NRAS and H-Ras/HRAS. Interacts (GTP-bound form) with MAPKAP1/SIN1; inhibiting K-Ras/KRAS activity. In terms of assembly, interacts (when farnesylated) with GPR31. Acetylation at Lys-104 prevents interaction with guanine nucleotide exchange factors (GEFs). In terms of processing, ubiquitinated by the BCR(LZTR1) E3 ubiquitin ligase complex at Lys-170 in a non-degradative manner, leading to inhibit Ras signaling by decreasing Ras association with membranes. Post-translationally, palmitoylated at Lys-182, Lys-184 and Lys-185. Lysine-depalmitoylation by SIRT2 promotes its localization to endomembranes in endocytic pathways.

The protein resides in the cell membrane. The protein localises to the endomembrane system. It is found in the cytoplasm. Its subcellular location is the cytosol. It catalyses the reaction GTP + H2O = GDP + phosphate + H(+). Alternates between an inactive form bound to GDP and an active form bound to GTP. Activated by a guanine nucleotide-exchange factor (GEF) and inactivated by a GTPase-activating protein (GAP). Interaction with SOS1 promotes exchange of bound GDP to GTP. In terms of biological role, ras proteins bind GDP/GTP and possess intrinsic GTPase activity. Plays an important role in the regulation of cell proliferation. Plays a role in promoting oncogenic events by inducing transcriptional silencing of tumor suppressor genes (TSGs) in colorectal cancer (CRC) cells in a ZNF304-dependent manner. The sequence is that of GTPase KRas (Kras) from Rattus norvegicus (Rat).